Consider the following 93-residue polypeptide: Pyrimidine/purine nucleoside phosphorylase (93 aa).

This sequence belongs to the nucleoside phosphorylase PpnP family.

The catalysed reaction is a purine D-ribonucleoside + phosphate = a purine nucleobase + alpha-D-ribose 1-phosphate. The enzyme catalyses adenosine + phosphate = alpha-D-ribose 1-phosphate + adenine. It catalyses the reaction cytidine + phosphate = cytosine + alpha-D-ribose 1-phosphate. It carries out the reaction guanosine + phosphate = alpha-D-ribose 1-phosphate + guanine. The catalysed reaction is inosine + phosphate = alpha-D-ribose 1-phosphate + hypoxanthine. The enzyme catalyses thymidine + phosphate = 2-deoxy-alpha-D-ribose 1-phosphate + thymine. It catalyses the reaction uridine + phosphate = alpha-D-ribose 1-phosphate + uracil. It carries out the reaction xanthosine + phosphate = alpha-D-ribose 1-phosphate + xanthine. Functionally, catalyzes the phosphorolysis of diverse nucleosides, yielding D-ribose 1-phosphate and the respective free bases. Can use uridine, adenosine, guanosine, cytidine, thymidine, inosine and xanthosine as substrates. Also catalyzes the reverse reactions. The protein is Pyrimidine/purine nucleoside phosphorylase of Vibrio atlanticus (strain LGP32) (Vibrio splendidus (strain Mel32)).